The sequence spans 87 residues: Small ribosomal subunit protein uS17 (87 aa).

The protein belongs to the universal ribosomal protein uS17 family. In terms of assembly, part of the 30S ribosomal subunit.

Its function is as follows. One of the primary rRNA binding proteins, it binds specifically to the 5'-end of 16S ribosomal RNA. The protein is Small ribosomal subunit protein uS17 of Dichelobacter nodosus (strain VCS1703A).